A 1188-amino-acid chain; its full sequence is Integrin alpha-11 (1188 aa).

A signal peptide spans 1–22 (MDFPRGLLVAWTLSLWPGFTDT). The Extracellular portion of the chain corresponds to 23 to 1141 (FNMDTRNPRV…ISKQEDWQVP (1119 aa)). FG-GAP repeat units lie at residues 24 to 85 (NMDT…NCTK) and 91 to 151 (VTLS…FSKT). A disulfide bond links cysteine 76 and cysteine 83. Asparagine 82 and asparagine 95 each carry an N-linked (GlcNAc...) asparagine glycan. Disulfide bonds link cysteine 121-cysteine 139 and cysteine 129-cysteine 159. The VWFA domain maps to 164–345 (DIVIVLDGSN…AALKDIVDAL (182 aa)). Asparagine 291, asparagine 331, asparagine 358, asparagine 449, and asparagine 462 each carry an N-linked (GlcNAc...) asparagine glycan. 5 FG-GAP repeats span residues 355–406 (TNKN…VIPH), 411–461 (LKEF…SMHN), 462–527 (NRSL…RFVY), 528–586 (NGTL…NILK), and 590–650 (QRIT…FEPS). 4 residues coordinate Ca(2+): aspartate 488, asparagine 490, aspartate 492, and aspartate 496. N-linked (GlcNAc...) asparagine glycosylation occurs at asparagine 528. Positions 551, 553, 555, 559, 613, 615, 617, and 621 each coordinate Ca(2+). Asparagine 642 carries N-linked (GlcNAc...) asparagine glycosylation. 3 cysteine pairs are disulfide-bonded: cysteine 659-cysteine 668, cysteine 674-cysteine 729, and cysteine 781-cysteine 787. A glycan (N-linked (GlcNAc...) asparagine) is linked at asparagine 694. N-linked (GlcNAc...) asparagine glycosylation is present at asparagine 857. A disulfide bond links cysteine 881 and cysteine 893. Asparagine 894, asparagine 973, asparagine 1031, asparagine 1039, and asparagine 1059 each carry an N-linked (GlcNAc...) asparagine glycan. The chain crosses the membrane as a helical span at residues 1142–1164 (IWIIVGSTLGGLLLLALLVLALW). Residues 1165–1188 (KLGFFKSAKRKREPGLGPIPKELK) lie on the Cytoplasmic side of the membrane.

Belongs to the integrin alpha chain family. Heterodimer of an alpha and a beta subunit. Alpha-11 associates with beta-1. Interacts with RAB21.

It is found in the membrane. Its function is as follows. Integrin alpha-11/beta-1 is a receptor for collagen. The chain is Integrin alpha-11 (Itga11) from Mus musculus (Mouse).